The chain runs to 127 residues: MIQGIGVDIVDIARMQQRIDAASGFRELVFSPAEITYCESKANKYESYAARFAAKEAFLKAVGIGIDFSIDLNQIEITNNKAGKPYFVYTKQVEALLLTHIGFVPDAQVSLSHSREQAIAFVLFNKN.

Mg(2+) is bound by residues aspartate 8 and glutamate 56.

The protein belongs to the P-Pant transferase superfamily. AcpS family. The cofactor is Mg(2+).

It is found in the cytoplasm. The catalysed reaction is apo-[ACP] + CoA = holo-[ACP] + adenosine 3',5'-bisphosphate + H(+). Transfers the 4'-phosphopantetheine moiety from coenzyme A to a Ser of acyl-carrier-protein. This is Holo-[acyl-carrier-protein] synthase from Cytophaga hutchinsonii (strain ATCC 33406 / DSM 1761 / CIP 103989 / NBRC 15051 / NCIMB 9469 / D465).